Reading from the N-terminus, the 287-residue chain is ATP synthase gamma chain (287 aa).

This sequence belongs to the ATPase gamma chain family. F-type ATPases have 2 components, CF(1) - the catalytic core - and CF(0) - the membrane proton channel. CF(1) has five subunits: alpha(3), beta(3), gamma(1), delta(1), epsilon(1). CF(0) has three main subunits: a, b and c.

It localises to the cell inner membrane. In terms of biological role, produces ATP from ADP in the presence of a proton gradient across the membrane. The gamma chain is believed to be important in regulating ATPase activity and the flow of protons through the CF(0) complex. The protein is ATP synthase gamma chain of Shigella sonnei (strain Ss046).